The primary structure comprises 202 residues: Mitochondrial import receptor subunit TOM20-3 (202 aa).

The residue at position 1 (Met-1) is an N-acetylmethionine. Over 1–174 (MDTETEFDRI…NKKSSDAKYD (174 aa)) the chain is Cytoplasmic. TPR repeat units follow at residues 38–74 (GGVL…DPKK) and 86–119 (TSFA…QPDN). The segment at 146 to 166 (SQPMGRVEAPAPPSSKAVKNK) is disordered. A helical membrane pass occupies residues 175–192 (AMGWVILAIGVVAWISFA). The Mitochondrial intermembrane segment spans residues 193–202 (KANVPVSPPR).

This sequence belongs to the Tom20 family. Forms part of the preprotein translocase complex of the outer mitochondrial membrane (TOM complex) which consists of at least 6 different proteins (TOM5, TOM6, TOM7, TOM20, TOM22/TOM9 and TOM40). Component of a mitochondrial large protein complex that contains, at least, MIC60, DGS1, TOM40, TOM20 proteins, and petC/RISP. Post-translationally, the N-terminus is blocked. As to expression, expressed in roots, flowers, young cotyledons and leaves.

It is found in the mitochondrion outer membrane. Its function is as follows. Central component of the receptor complex responsible for the recognition and translocation of cytosolically synthesized mitochondrial preproteins. Together with TOM22 functions as the transit peptide receptor at the surface of the mitochondrion outer membrane and facilitates the movement of preproteins into the translocation pore. In Arabidopsis thaliana (Mouse-ear cress), this protein is Mitochondrial import receptor subunit TOM20-3.